Reading from the N-terminus, the 299-residue chain is uncharacterized protein (299 aa).

Residues 1 to 59 (MDKIHAMQLFIKVAELESFSRAADFFALPKGSVSRQIQALEHQLGTQLLQRTTRRVKLT) form the HTH lysR-type domain. Residues 19 to 38 (FSRAADFFALPKGSVSRQIQ) constitute a DNA-binding region (H-T-H motif).

The protein belongs to the LysR transcriptional regulatory family.

This is an uncharacterized protein from Escherichia coli (strain K12).